Reading from the N-terminus, the 628-residue chain is 1-deoxy-D-xylulose-5-phosphate synthase (628 aa).

Thiamine diphosphate contacts are provided by residues histidine 72 and 113–115; that span reads GHS. Aspartate 144 provides a ligand contact to Mg(2+). Thiamine diphosphate contacts are provided by residues 145–146, asparagine 173, tyrosine 284, and glutamate 367; that span reads GA. Residue asparagine 173 coordinates Mg(2+).

The protein belongs to the transketolase family. DXPS subfamily. In terms of assembly, homodimer. Requires Mg(2+) as cofactor. Thiamine diphosphate serves as cofactor.

The enzyme catalyses D-glyceraldehyde 3-phosphate + pyruvate + H(+) = 1-deoxy-D-xylulose 5-phosphate + CO2. The protein operates within metabolic intermediate biosynthesis; 1-deoxy-D-xylulose 5-phosphate biosynthesis; 1-deoxy-D-xylulose 5-phosphate from D-glyceraldehyde 3-phosphate and pyruvate: step 1/1. In terms of biological role, catalyzes the acyloin condensation reaction between C atoms 2 and 3 of pyruvate and glyceraldehyde 3-phosphate to yield 1-deoxy-D-xylulose-5-phosphate (DXP). This Exiguobacterium sibiricum (strain DSM 17290 / CCUG 55495 / CIP 109462 / JCM 13490 / 255-15) protein is 1-deoxy-D-xylulose-5-phosphate synthase.